The primary structure comprises 162 residues: COP9 signalosome complex subunit 9 (162 aa).

Positions 6–118 constitute a PCI domain; sequence ETIKSLEDPY…SVSKSMKFSR (113 aa).

In terms of assembly, component of a COP9 signalosome-like (CSN) complex, composed of at least RRI1/CSN5, CSN9, RRI2/CSN10, PCI8/CSN11, CSN12 and CSI1. In the complex, it probably interacts directly with CSN12 and CSI1. Also interacts with RPN5.

It is found in the cytoplasm. It localises to the nucleus. Component of the COP9 signalosome (CSN) complex that acts as a regulator of the ubiquitin (Ubl) conjugation pathway by mediating the deneddylation of the cullin subunit of SCF-type E3 ubiquitin-protein ligase complexes. The CSN complex is involved in the regulation of the mating pheromone response. This is COP9 signalosome complex subunit 9 (CSN9) from Saccharomyces cerevisiae (strain ATCC 204508 / S288c) (Baker's yeast).